Consider the following 118-residue polypeptide: UPF0342 protein BC_0880 (118 aa).

The protein belongs to the UPF0342 family.

The protein is UPF0342 protein BC_0880 of Bacillus cereus (strain ATCC 14579 / DSM 31 / CCUG 7414 / JCM 2152 / NBRC 15305 / NCIMB 9373 / NCTC 2599 / NRRL B-3711).